The following is a 239-amino-acid chain: Small ribosomal subunit protein uS3 (239 aa).

A KH type-2 domain is found at 39–107; sequence IRAALMKTLK…EVLINIVEVR (69 aa). The tract at residues 214–239 is disordered; the sequence is AQDKKMAEQDHGGGGGDRRRRDRDAA.

Belongs to the universal ribosomal protein uS3 family. Part of the 30S ribosomal subunit. Forms a tight complex with proteins S10 and S14.

Functionally, binds the lower part of the 30S subunit head. Binds mRNA in the 70S ribosome, positioning it for translation. The polypeptide is Small ribosomal subunit protein uS3 (Methylocella silvestris (strain DSM 15510 / CIP 108128 / LMG 27833 / NCIMB 13906 / BL2)).